Consider the following 282-residue polypeptide: L-allo-isoleucyltransferase (282 aa).

C105 functions as the Acyl-thioester intermediate in the catalytic mechanism. Positions H169–G261 constitute an AB hydrolase-1 domain.

The protein belongs to the AB hydrolase superfamily.

It catalyses the reaction holo-[CmaD peptidyl-carrier protein] + L-alloisoleucyl-[CmaA peptidyl-carrier protein] = L-alloisoleucyl-[CmaD peptidyl-carrier protein] + holo-[CmaA peptidyl-carrier protein]. Functionally, involved in the biosynthesis of the phytotoxin coronatine (COR). Catalyzes the transfer of the aminoacyl group covalently attached to the pantetheinyl arm of CmaA to the holo-pantetheinyl arm of CmaD. During the shuttling process, CmaE generates a covalent-aminoacyl-S-Cys enzyme intermediate by the action of its donor substrate L-aminoacyl-S-CmaA and delivers it to the sulfhydryl group attached to the phosphopantetheinyl arm on CmaD. This Pseudomonas savastanoi pv. glycinea (Pseudomonas syringae pv. glycinea) protein is L-allo-isoleucyltransferase.